Consider the following 513-residue polypeptide: TRAF3-interacting JNK-activating modulator (513 aa).

3 disordered regions span residues 1–96, 130–171, and 381–402; these read MISS…GQVS, SSGI…KAEE, and SLQGDGEQQSSETQDLQDQLKK. The Cytoplasmic portion of the chain corresponds to 1 to 485; that stretch reads MISSDSRSSP…QLQVKENELQ (485 aa). Basic and acidic residues-rich tracts occupy residues 17 to 31 and 69 to 79; these read ESYEAKCERRQETRE and RNLEEEKKGQA. A coiled-coil region spans residues 266–488; it reads MKKVLLEMED…VKENELQCGQ (223 aa). Residues 386–397 show a composition bias toward polar residues; the sequence is GEQQSSETQDLQ. A helical; Anchor for type IV membrane protein transmembrane segment spans residues 486–506; it reads CGQWLPVLMVVIATALAVFLA. Topologically, residues 507–513 are extracellular; that stretch reads NKGNLVI.

In terms of assembly, interacts (via its coiled-coil domain) with TRAF3 (via isoleucine zipper). Interacts with MAP2K1. Interacts with PPP2CA; this interaction targets PPP2CA to the lysosomes. Interacts with MAVS. Interacts with TBK1. Expressed in bone marrow, spleen and thymus. Not detected in heart, kidney and liver.

The protein localises to the cell membrane. Its subcellular location is the golgi apparatus membrane. The protein resides in the lysosome membrane. It is found in the mitochondrion outer membrane. Adapter protein that plays essential roles in both innate and adaptive immunity. Plays a crucial role in the regulation of thymocyte development. Mechanistically, mediates TCR-stimulated activation through recruiting MAP2K1/MEK1 to the Golgi and, thereby, facilitating the interaction of MAP2K1/MEK1 with its activator BRAF. Also plays an essential role in regulatory T-cell stability and function by recruiting the serine-threonine phosphatase catalytic subunit (PPP2CA) to the lysosome, thereby facilitating the interaction of PP2Ac with the mTORC1 component RPTOR and restricting glycolytic metabolism. Positively regulates TLR4 signaling activity in macrophage-mediated inflammation by acting as a molecular clamp to facilitate LPS-induced translocation of TLR4 to lipid rafts. In response to viral infection, facilitates the recruitment of TRAF3 to MAVS within mitochondria leading to IRF3 activation and interferon production. However, participates in the maintenance of immune homeostasis and the prevention of overzealous innate immunity by promoting 'Lys-48'-dependent ubiquitination of TBK1. This is TRAF3-interacting JNK-activating modulator (Traf3ip3) from Mus musculus (Mouse).